The following is a 325-amino-acid chain: Small ribosomal subunit protein uS4m (325 aa).

The 64-residue stretch at 146-209 (KRIDMILLRS…HKQNLIHRLK (64 aa)) folds into the S4 RNA-binding domain.

Belongs to the universal ribosomal protein uS4 family.

Its subcellular location is the mitochondrion. The polypeptide is Small ribosomal subunit protein uS4m (mrps4) (Dictyostelium citrinum (Slime mold)).